A 218-amino-acid chain; its full sequence is Eukaryotic translation initiation factor 3 subunit K (218 aa).

Residue Ala2 is modified to N-acetylalanine. Residue Thr28 is modified to Phosphothreonine. The 163-residue stretch at 42–204 (YDLEANLAVL…SIKPKNIVEK (163 aa)) folds into the PCI domain. Ser217 is modified (phosphoserine).

As to quaternary structure, component of the eukaryotic translation initiation factor 3 (eIF-3) complex, which is composed of 13 subunits: EIF3A, EIF3B, EIF3C, EIF3D, EIF3E, EIF3F, EIF3G, EIF3H, EIF3I, EIF3J, EIF3K, EIF3L and EIF3M. The eIF-3 complex appears to include 3 stable modules: module A is composed of EIF3A, EIF3B, EIF3G and EIF3I; module B is composed of EIF3F, EIF3H, and EIF3M; and module C is composed of EIF3C, EIF3D, EIF3E, EIF3K and EIF3L. EIF3C of module C binds EIF3B of module A and EIF3H of module B, thereby linking the three modules. EIF3J is a labile subunit that binds to the eIF-3 complex via EIF3B. The eIF-3 complex interacts with RPS6KB1 under conditions of nutrient depletion. Mitogenic stimulation leads to binding and activation of a complex composed of MTOR and RPTOR, leading to phosphorylation and release of RPS6KB1 and binding of EIF4B to eIF-3. Interacts with CCND3, but not with CCND1 and CCND2. Ubiquitous, with the highest levels of expression in brain, testis and kidney.

Its subcellular location is the nucleus. It localises to the cytoplasm. In terms of biological role, component of the eukaryotic translation initiation factor 3 (eIF-3) complex, which is required for several steps in the initiation of protein synthesis. The eIF-3 complex associates with the 40S ribosome and facilitates the recruitment of eIF-1, eIF-1A, eIF-2:GTP:methionyl-tRNAi and eIF-5 to form the 43S pre-initiation complex (43S PIC). The eIF-3 complex stimulates mRNA recruitment to the 43S PIC and scanning of the mRNA for AUG recognition. The eIF-3 complex is also required for disassembly and recycling of post-termination ribosomal complexes and subsequently prevents premature joining of the 40S and 60S ribosomal subunits prior to initiation. The eIF-3 complex specifically targets and initiates translation of a subset of mRNAs involved in cell proliferation, including cell cycling, differentiation and apoptosis, and uses different modes of RNA stem-loop binding to exert either translational activation or repression. This is Eukaryotic translation initiation factor 3 subunit K from Homo sapiens (Human).